Here is a 428-residue protein sequence, read N- to C-terminus: Adenylosuccinate synthetase (428 aa).

Residues Gly12–Lys18 and Gly40–Thr42 each bind GTP. The Proton acceptor role is filled by Asp13. Mg(2+) is bound by residues Asp13 and Gly40. IMP contacts are provided by residues Asp13–Lys16, Asn38–His41, Thr130, Arg144, Gln225, Thr240, and Arg304. The active-site Proton donor is the His41. Residue Val300 to Arg306 participates in substrate binding. GTP is bound by residues Arg306, Lys332–Asp334, and Ser414–Gly416.

Belongs to the adenylosuccinate synthetase family. Homodimer. Mg(2+) is required as a cofactor.

It is found in the cytoplasm. It carries out the reaction IMP + L-aspartate + GTP = N(6)-(1,2-dicarboxyethyl)-AMP + GDP + phosphate + 2 H(+). Its pathway is purine metabolism; AMP biosynthesis via de novo pathway; AMP from IMP: step 1/2. In terms of biological role, plays an important role in the de novo pathway of purine nucleotide biosynthesis. Catalyzes the first committed step in the biosynthesis of AMP from IMP. The protein is Adenylosuccinate synthetase of Clostridium botulinum (strain Loch Maree / Type A3).